The sequence spans 447 residues: Cytochrome P450 monooxygenase aunB (447 aa).

Residue cysteine 386 participates in heme binding.

This sequence belongs to the cytochrome P450 family. The cofactor is heme.

The enzyme catalyses 2 fonsecin B + NADPH + O2 + H(+) = aurasperone B + NADP(+) + 2 H2O. It carries out the reaction 2 rubrofusarin B + NADPH + O2 + H(+) = aurasperone A + NADP(+) + 2 H2O. Its pathway is secondary metabolite biosynthesis. Its function is as follows. Cytochrome P450 monooxygenase; part of the gene cluster that mediates the biosynthesis of aurasperone B, a dimeric gamma-naphthopyrone. The first step in the biosynthesis of aurasperone B is the production of gamma-naphthopyrone precursor YWA1 by the non-reducing polyketide synthase albA, via condensation of one acetyl-CoA starter unit with 6 malonyl-CoA units. YWA1 is then methylated by aunE at position C-6 to yield foncesin which is further methylated at position C-8 by aunD to produce fonsecin B. A key enzyme in the biosynthetic pathway is the cytochrome P450 monooxygenase aunB which catalyzes the oxidative dimerization of fonsecin B to aurasperone B. AunB also catalyzes the oxidative dimerization of rubrofusarin B into aurasperone A. This is Cytochrome P450 monooxygenase aunB from Aspergillus niger (strain ATCC MYA-4892 / CBS 513.88 / FGSC A1513).